Here is a 308-residue protein sequence, read N- to C-terminus: D-alanine--D-alanine ligase (308 aa).

The 196-residue stretch at 108 to 303 folds into the ATP-grasp domain; the sequence is KLVWKAAGLP…YEALCLKVLE (196 aa). An ATP-binding site is contributed by 134-189; that stretch reads EAELGLPMFVKPACEGSSLGVTKVRKAGELAQAYAEARKFDPLVLAEQFVGGGEYT. Mg(2+) is bound by residues aspartate 257, glutamate 270, and asparagine 272.

The protein belongs to the D-alanine--D-alanine ligase family. Mg(2+) serves as cofactor. It depends on Mn(2+) as a cofactor.

It is found in the cytoplasm. The catalysed reaction is 2 D-alanine + ATP = D-alanyl-D-alanine + ADP + phosphate + H(+). Its pathway is cell wall biogenesis; peptidoglycan biosynthesis. In terms of biological role, cell wall formation. The protein is D-alanine--D-alanine ligase of Laribacter hongkongensis (strain HLHK9).